We begin with the raw amino-acid sequence, 414 residues long: Histidine--tRNA ligase (414 aa).

The protein belongs to the class-II aminoacyl-tRNA synthetase family. As to quaternary structure, homodimer.

Its subcellular location is the cytoplasm. It catalyses the reaction tRNA(His) + L-histidine + ATP = L-histidyl-tRNA(His) + AMP + diphosphate + H(+). The protein is Histidine--tRNA ligase of Solibacter usitatus (strain Ellin6076).